A 474-amino-acid chain; its full sequence is Gasdermin-C (474 aa).

A triggers pyroptosis region spans residues 1-237; that stretch reads MLYTFDQVSK…TCAILLSANA (237 aa).

It belongs to the gasdermin family. Homooligomer; homooligomeric ring-shaped pore complex containing 27-28 subunits when inserted in the membrane. In terms of processing, cleavage by CASP8 relieves autoinhibition by releasing the N-terminal moiety (Gasdermin-C, N-terminal) that initiates pyroptosis. Palmitoylated.

The protein localises to the cytoplasm. Its subcellular location is the cytosol. The protein resides in the cell membrane. With respect to regulation, the full-length protein before cleavage is inactive: intramolecular interactions between N- and C-terminal domains mediate autoinhibition in the absence of activation signal. The intrinsic pyroptosis-inducing activity is carried by the released N-terminal moiety (Gasdermin-C, N-terminal) following cleavage by caspase CASP8. In terms of biological role, this form constitutes the precursor of the pore-forming protein: upon cleavage, the released N-terminal moiety (Gasdermin-C, N-terminal) binds to membranes and forms pores, triggering pyroptosis. Pore-forming protein that causes membrane permeabilization and pyroptosis. Produced by the cleavage of gasdermin-C by caspase CASP8 in response to death signals. After cleavage, moves to the plasma membrane where it strongly binds to membrane inner leaflet lipids. Homooligomerizes within the membrane and forms pores of 10-15 nanometers (nm) of inner diameter, triggering pyroptosis. This is Gasdermin-C from Rattus norvegicus (Rat).